The chain runs to 328 residues: MIYQMQMPERIEVDEATHSESIGQFVAQPLERGYGVTLGNAMRRVLLASLPGTAITGIKIDGVFHEFSTIDGVREDVPEIVLNLKKVRFKSTTKRSCKTSLSIEGPADFKAGDIVAQEGEFEVLNKDMHIATLNGDAKLNIDIYIGRGRGYVPAEENRGEGMPIGFIAIDSIFTPIKNVKFSVENTRVGQRTDYEKMILDVETDGSISPDDSISLAGKVINEHVSLFANFSPTEEEFAEEEYKQQDDEFENMRKLLQTRIEDLDLSVRSHNCLRLAEIDTLGDLVSRKEDELLTYKNFGKKSLTELKEQLDKCELKFGMDITKYQMKS.

Residues 1–231 (MIYQMQMPER…EHVSLFANFS (231 aa)) are alpha N-terminal domain (alpha-NTD). Residues 252–328 (MRKLLQTRIE…MDITKYQMKS (77 aa)) form an alpha C-terminal domain (alpha-CTD) region.

The protein belongs to the RNA polymerase alpha chain family. Homodimer. The RNAP catalytic core consists of 2 alpha, 1 beta, 1 beta' and 1 omega subunit. When a sigma factor is associated with the core the holoenzyme is formed, which can initiate transcription.

It carries out the reaction RNA(n) + a ribonucleoside 5'-triphosphate = RNA(n+1) + diphosphate. In terms of biological role, DNA-dependent RNA polymerase catalyzes the transcription of DNA into RNA using the four ribonucleoside triphosphates as substrates. The polypeptide is DNA-directed RNA polymerase subunit alpha (Prosthecochloris aestuarii (strain DSM 271 / SK 413)).